The chain runs to 333 residues: Holliday junction branch migration complex subunit RuvB (333 aa).

The segment at 1–182 (MDERLLSGES…FGVLSRLEYY (182 aa)) is large ATPase domain (RuvB-L). ATP-binding positions include Leu21, Arg22, Gly63, Lys66, Thr67, Thr68, 129–131 (EDF), Arg172, Tyr182, and Arg219. Mg(2+) is bound at residue Thr67. Residues 183 to 253 (TVDQLSAIVE…ITQMALELLQ (71 aa)) are small ATPAse domain (RuvB-S). Residues 256-333 (KLGLDHIDHK…QHFGMEMPKI (78 aa)) are head domain (RuvB-H). Positions 311 and 316 each coordinate DNA.

The protein belongs to the RuvB family. In terms of assembly, homohexamer. Forms an RuvA(8)-RuvB(12)-Holliday junction (HJ) complex. HJ DNA is sandwiched between 2 RuvA tetramers; dsDNA enters through RuvA and exits via RuvB. An RuvB hexamer assembles on each DNA strand where it exits the tetramer. Each RuvB hexamer is contacted by two RuvA subunits (via domain III) on 2 adjacent RuvB subunits; this complex drives branch migration. In the full resolvosome a probable DNA-RuvA(4)-RuvB(12)-RuvC(2) complex forms which resolves the HJ.

The protein localises to the cytoplasm. The enzyme catalyses ATP + H2O = ADP + phosphate + H(+). Functionally, the RuvA-RuvB-RuvC complex processes Holliday junction (HJ) DNA during genetic recombination and DNA repair, while the RuvA-RuvB complex plays an important role in the rescue of blocked DNA replication forks via replication fork reversal (RFR). RuvA specifically binds to HJ cruciform DNA, conferring on it an open structure. The RuvB hexamer acts as an ATP-dependent pump, pulling dsDNA into and through the RuvAB complex. RuvB forms 2 homohexamers on either side of HJ DNA bound by 1 or 2 RuvA tetramers; 4 subunits per hexamer contact DNA at a time. Coordinated motions by a converter formed by DNA-disengaged RuvB subunits stimulates ATP hydrolysis and nucleotide exchange. Immobilization of the converter enables RuvB to convert the ATP-contained energy into a lever motion, pulling 2 nucleotides of DNA out of the RuvA tetramer per ATP hydrolyzed, thus driving DNA branch migration. The RuvB motors rotate together with the DNA substrate, which together with the progressing nucleotide cycle form the mechanistic basis for DNA recombination by continuous HJ branch migration. Branch migration allows RuvC to scan DNA until it finds its consensus sequence, where it cleaves and resolves cruciform DNA. The sequence is that of Holliday junction branch migration complex subunit RuvB from Bacillus cytotoxicus (strain DSM 22905 / CIP 110041 / 391-98 / NVH 391-98).